A 108-amino-acid polypeptide reads, in one-letter code: MLKTTLLFFMTALCEIVGCFLPWLWLKRGATAWLLVPAGVSLALFVWLLTLHPAASGRVYAAYGGVYVCTALLWLRFVDGVRLSLYDWSGALIALCGMLIIVAGWGRA.

Transmembrane regions (helical) follow at residues 6-26, 29-49, 61-81, and 85-105; these read LLFF…WLWL, GATA…VWLL, AAYG…VDGV, and LYDW…VAGW.

This sequence belongs to the UPF0060 family.

It is found in the cell inner membrane. The sequence is that of UPF0060 membrane protein CKO_01576 from Citrobacter koseri (strain ATCC BAA-895 / CDC 4225-83 / SGSC4696).